The chain runs to 128 residues: MQKLLLALIVGLGGFLGASLRYLISIFAAKNFGGNFPYGTLIANILGALLIGFIMEFSMDSALISSNMKLFLTTGIMGGLTTFSTFSYETISMLTNGNMTLGIENIILNLGCSLLFVVIGQKLARILF.

The next 4 membrane-spanning stretches (helical) occupy residues 4 to 24, 39 to 59, 71 to 91, and 99 to 119; these read LLLALIVGLGGFLGASLRYLI, GTLIANILGALLIGFIMEFSM, FLTTGIMGGLTTFSTFSYETI, and MTLGIENIILNLGCSLLFVVI. The Na(+) site is built by Gly-78 and Thr-81.

The protein belongs to the fluoride channel Fluc/FEX (TC 1.A.43) family.

The protein resides in the cell membrane. The enzyme catalyses fluoride(in) = fluoride(out). Its activity is regulated as follows. Na(+) is not transported, but it plays an essential structural role and its presence is essential for fluoride channel function. Fluoride-specific ion channel. Important for reducing fluoride concentration in the cell, thus reducing its toxicity. The chain is Fluoride-specific ion channel FluC from Clostridium perfringens (strain 13 / Type A).